Consider the following 116-residue polypeptide: MSNHKLIEAVTKSQLRTDLPTFRPGDTVRVHVRIVEGTRERIQVFEGVVIKRHGGGISETFTVRKISSGVGVERTFPLHTPKIEKIEVKRRGKVRRAKLYYLRNLRGKAARIKEIR.

It belongs to the bacterial ribosomal protein bL19 family.

Its function is as follows. This protein is located at the 30S-50S ribosomal subunit interface and may play a role in the structure and function of the aminoacyl-tRNA binding site. This is Large ribosomal subunit protein bL19 from Staphylococcus carnosus (strain TM300).